A 269-amino-acid polypeptide reads, in one-letter code: Oligoribonuclease, mitochondrial (269 aa).

In terms of domain architecture, Exonuclease spans 55–227 (LVWIDCEMTG…SDIKESIAQL (173 aa)). Tyr184 is a catalytic residue. Residues 240–269 (ETESVESIGSEQPESPSSSTSSLKRQRTDF) form a disordered region. Residues 245–261 (ESIGSEQPESPSSSTSS) show a composition bias toward low complexity.

The protein belongs to the oligoribonuclease family.

It is found in the mitochondrion. 3'-to-5' exoribonuclease specific for small oligoribonucleotides. This Saccharomyces cerevisiae (strain ATCC 204508 / S288c) (Baker's yeast) protein is Oligoribonuclease, mitochondrial (REX2).